The primary structure comprises 65 residues: MNIFVDQDNYKEVSLKLTKKLLTSEHYQFLLCFKGEKLDITISVTPQSLVKLRDDINELIFMFSD.

The chain is SPbeta prophage-derived uncharacterized protein YopU (yopU) from Bacillus subtilis (strain 168).